A 321-amino-acid chain; its full sequence is MHKYQTHWVEHSIVKILSSAGKKYIALMAGGMSAEREVSLVSSEGVSKALIELGYSVTFIDMGADITVRLQEIKPDIVFNCLHGTYGEDGCLPGLLNIMRIPYTHSGMLSSALAFNKIHSRSWFLTNNINMAESIVVNKSDNIKNDPMKRPYVIKPLTQGSSIGVEVIFAEDNFNFADYDFPYGDQVIIEQYIKGRELQVAVLNGKALGVLEIKLLKNRFYDYETKYTEGFADHLCPAPLPANLYEKLLIESEKIYKTMNCKGPARAEFILEEQTNKLYALELNTHPGMTPLSIVPEIAAYAGINFTNLIEEIIKTASFES.

In terms of domain architecture, ATP-grasp spans 121–315 (RSWFLTNNIN…FTNLIEEIIK (195 aa)). 147–199 (PMKRPYVIKPLTQGSSIGVEVIFAEDNFNFADYDFPYGDQVIIEQYIKGRELQ) contributes to the ATP binding site. Residues glutamate 268, glutamate 282, and asparagine 284 each coordinate Mg(2+).

This sequence belongs to the D-alanine--D-alanine ligase family. Mg(2+) serves as cofactor. Requires Mn(2+) as cofactor.

It localises to the cytoplasm. It catalyses the reaction 2 D-alanine + ATP = D-alanyl-D-alanine + ADP + phosphate + H(+). The protein operates within cell wall biogenesis; peptidoglycan biosynthesis. Its function is as follows. Cell wall formation. The protein is D-alanine--D-alanine ligase of Rickettsia massiliae (strain Mtu5).